Here is a 738-residue protein sequence, read N- to C-terminus: Interleukin-12 receptor subunit beta-1 (738 aa).

The N-terminal stretch at M1–C19 is a signal peptide. Residues Q20–S565 are Extracellular-facing. 5 Fibronectin type-III domains span residues G47 to L152, L152 to L258, P259 to Q359, E360 to S465, and T469 to S565. A glycan (N-linked (GlcNAc...) asparagine) is linked at N50. Cysteines 53 and 63 form a disulfide. N-linked (GlcNAc...) asparagine glycans are attached at residues N73, N86, N130, N144, N169, and N188. Residues W244–S248 carry the WSXWS motif motif. 6 N-linked (GlcNAc...) asparagine glycosylation sites follow: N330, N368, N374, N401, N463, and N477. The chain crosses the membrane as a helical span at residues R566 to L591. The Cytoplasmic portion of the chain corresponds to N592 to A738. The short motif at L598–C606 is the Box 1 motif element.

This sequence belongs to the type I cytokine receptor family. Type 2 subfamily. In terms of assembly, dimer or oligomer; disulfide-linked. Interacts with IL12RB2 to form the high affinity IL12 receptor. Heterodimer with IL23R; in presence of IL23. The heterodimer forms the IL23 receptor.

It is found in the membrane. Functionally, functions as an interleukin receptor which binds interleukin-12 with low affinity and is involved in IL12 transduction. Associated with IL12RB2 it forms a functional, high affinity receptor for IL12. Also associates with IL23R to form the interleukin-23 receptor which functions in IL23 signal transduction probably through activation of the Jak-Stat signaling cascade. The polypeptide is Interleukin-12 receptor subunit beta-1 (Il12rb1) (Mus musculus (Mouse)).